We begin with the raw amino-acid sequence, 108 residues long: U-scoloptoxin(16)-Sm1a (108 aa).

An N-terminal signal peptide occupies residues 1 to 19 (MNLFLVLFVFSFSVSQFFA).

This sequence belongs to the scoloptoxin-16 family. In terms of processing, contains 4 disulfide bonds. As to expression, expressed by the venom gland.

It is found in the secreted. The polypeptide is U-scoloptoxin(16)-Sm1a (Scolopendra morsitans (Tanzanian blue ringleg centipede)).